The chain runs to 182 residues: ATP-dependent protease subunit HslV (182 aa).

Residue Thr-2 is part of the active site. Na(+) is bound by residues Gly-157, Cys-160, and Thr-163.

The protein belongs to the peptidase T1B family. HslV subfamily. In terms of assembly, a double ring-shaped homohexamer of HslV is capped on each side by a ring-shaped HslU homohexamer. The assembly of the HslU/HslV complex is dependent on binding of ATP.

The protein resides in the cytoplasm. It catalyses the reaction ATP-dependent cleavage of peptide bonds with broad specificity.. With respect to regulation, allosterically activated by HslU binding. In terms of biological role, protease subunit of a proteasome-like degradation complex believed to be a general protein degrading machinery. The sequence is that of ATP-dependent protease subunit HslV from Vibrio atlanticus (strain LGP32) (Vibrio splendidus (strain Mel32)).